A 332-amino-acid chain; its full sequence is Phosphate acyltransferase (332 aa).

The protein belongs to the PlsX family. As to quaternary structure, homodimer. Probably interacts with PlsY.

It localises to the cytoplasm. The catalysed reaction is a fatty acyl-[ACP] + phosphate = an acyl phosphate + holo-[ACP]. The protein operates within lipid metabolism; phospholipid metabolism. Functionally, catalyzes the reversible formation of acyl-phosphate (acyl-PO(4)) from acyl-[acyl-carrier-protein] (acyl-ACP). This enzyme utilizes acyl-ACP as fatty acyl donor, but not acyl-CoA. The polypeptide is Phosphate acyltransferase (Thermoanaerobacter pseudethanolicus (strain ATCC 33223 / 39E) (Clostridium thermohydrosulfuricum)).